Here is a 772-residue protein sequence, read N- to C-terminus: uncharacterized protein (772 aa).

A run of 2 helical transmembrane segments spans residues Leu-16–Tyr-36 and Ile-301–Trp-321. Residues Asp-670–Gln-768 form the HTH araC/xylS-type domain. DNA-binding regions (H-T-H motif) lie at residues Asp-687–Met-708 and Val-735–Glu-758.

The protein localises to the cell membrane. This is an uncharacterized protein from Bacillus subtilis (strain 168).